An 847-amino-acid chain; its full sequence is DNA mismatch repair protein MutS (847 aa).

602 to 609 (GPNMSGKS) is an ATP binding site.

It belongs to the DNA mismatch repair MutS family.

This protein is involved in the repair of mismatches in DNA. It is possible that it carries out the mismatch recognition step. This protein has a weak ATPase activity. The chain is DNA mismatch repair protein MutS from Streptococcus uberis (strain ATCC BAA-854 / 0140J).